The primary structure comprises 600 residues: Glutamine--fructose-6-phosphate aminotransferase [isomerizing] (600 aa).

Catalysis depends on Cys2, which acts as the Nucleophile; for GATase activity. The region spanning 2 to 217 (CGIVGYIGTE…DEEIVIVTKD (216 aa)) is the Glutamine amidotransferase type-2 domain. SIS domains follow at residues 283-422 (IRQA…AKGI) and 452-590 (IARD…VDKP). The active-site For Fru-6P isomerization activity is the Lys595.

In terms of assembly, homodimer.

It localises to the cytoplasm. The catalysed reaction is D-fructose 6-phosphate + L-glutamine = D-glucosamine 6-phosphate + L-glutamate. Its function is as follows. Catalyzes the first step in hexosamine metabolism, converting fructose-6P into glucosamine-6P using glutamine as a nitrogen source. This chain is Glutamine--fructose-6-phosphate aminotransferase [isomerizing], found in Halalkalibacterium halodurans (strain ATCC BAA-125 / DSM 18197 / FERM 7344 / JCM 9153 / C-125) (Bacillus halodurans).